Reading from the N-terminus, the 433-residue chain is Homogentisate 1,2-dioxygenase (433 aa).

The Proton acceptor role is filled by H288. Fe cation-binding residues include H331 and E337. Homogentisate-binding residues include Y346 and H367. Residue H367 participates in Fe cation binding.

This sequence belongs to the homogentisate dioxygenase family. Hexamer; dimer of trimers. The cofactor is Fe cation.

The catalysed reaction is homogentisate + O2 = 4-maleylacetoacetate + H(+). It participates in amino-acid degradation; L-phenylalanine degradation; acetoacetate and fumarate from L-phenylalanine: step 4/6. In terms of biological role, involved in the catabolism of homogentisate (2,5-dihydroxyphenylacetate or 2,5-OH-PhAc), a central intermediate in the degradation of phenylalanine and tyrosine. Catalyzes the oxidative ring cleavage of the aromatic ring of homogentisate to yield maleylacetoacetate. This is Homogentisate 1,2-dioxygenase from Pseudomonas putida (strain ATCC 700007 / DSM 6899 / JCM 31910 / BCRC 17059 / LMG 24140 / F1).